The sequence spans 181 residues: Protein Syd (181 aa).

It belongs to the Syd family.

It is found in the cell inner membrane. Interacts with the SecY protein in vivo. May bind preferentially to an uncomplexed state of SecY, thus functioning either as a chelating agent for excess SecY in the cell or as a regulatory factor that negatively controls the translocase function. The sequence is that of Protein Syd from Escherichia coli O157:H7.